Reading from the N-terminus, the 270-residue chain is tRNA (guanine-N(1)-)-methyltransferase (270 aa).

Residues G117 and 137–142 contribute to the S-adenosyl-L-methionine site; that span reads IGDYVL.

Belongs to the RNA methyltransferase TrmD family. As to quaternary structure, homodimer.

It localises to the cytoplasm. It carries out the reaction guanosine(37) in tRNA + S-adenosyl-L-methionine = N(1)-methylguanosine(37) in tRNA + S-adenosyl-L-homocysteine + H(+). Its function is as follows. Specifically methylates guanosine-37 in various tRNAs. The sequence is that of tRNA (guanine-N(1)-)-methyltransferase from Heliobacterium modesticaldum (strain ATCC 51547 / Ice1).